We begin with the raw amino-acid sequence, 619 residues long: Lateral signaling target protein 2 homolog (619 aa).

The FYVE-type zinc finger occupies 501-561; it reads DSDCEQCTAC…VCNLCFLYKI (61 aa). Zn(2+) is bound by residues C507, C510, C523, C526, C531, C534, C553, and C556. Residues 598–619 form a disordered region; the sequence is HERSQDGSQSNESPTATTATTI. The span at 603 to 619 shows a compositional bias: polar residues; that stretch reads DGSQSNESPTATTATTI.

The protein belongs to the lst-2 family.

Its function is as follows. Negative regulator of epidermal growth factor receptor (EGFR) signaling. The chain is Lateral signaling target protein 2 homolog from Brugia malayi (Filarial nematode worm).